Consider the following 339-residue polypeptide: Adenylosuccinate synthetase (339 aa).

GTP contacts are provided by residues 12 to 18 (GDEGKGS) and 42 to 44 (GHS). The active-site Proton acceptor is aspartate 13. Positions 13 and 42 each coordinate Mg(2+). Residues 13-16 (DEGK), 40-43 (NAGH), threonine 127, arginine 141, glutamine 179, threonine 194, and arginine 256 each bind IMP. The active-site Proton donor is histidine 43. 252–258 (TVTGRRR) is a binding site for substrate. Residues arginine 258, 284–286 (MLD), and 324–326 (KTG) contribute to the GTP site.

It belongs to the adenylosuccinate synthetase family. Homodimer. Mg(2+) is required as a cofactor.

It localises to the cytoplasm. The enzyme catalyses IMP + L-aspartate + GTP = N(6)-(1,2-dicarboxyethyl)-AMP + GDP + phosphate + 2 H(+). The protein operates within purine metabolism; AMP biosynthesis via de novo pathway; AMP from IMP: step 1/2. Its function is as follows. Plays an important role in the de novo pathway of purine nucleotide biosynthesis. Catalyzes the first committed step in the biosynthesis of AMP from IMP. The chain is Adenylosuccinate synthetase from Thermococcus onnurineus (strain NA1).